Reading from the N-terminus, the 215-residue chain is Transmembrane protein 267 (215 aa).

3 helical membrane-spanning segments follow: residues Phe-77–Leu-97, Phe-114–Phe-134, and Phe-178–Phe-198.

It is found in the membrane. The protein is Transmembrane protein 267 (TMEM267) of Bos taurus (Bovine).